The sequence spans 165 residues: MAFENKIVEAFIEIPTGSQNKYEFDKERGIFKLDRVLYSPMFYPAEYGYLQNTLALDGDPLDILVITTNPPFPGCVIDTRVIGYLNMVDSGEEDAKLIGVPVEDPRFDEVRSIEDLPQHKLKEIAHFFERYKDLQGKRTEIGTWEGPEAAAKLIDECIARYNEQK.

Substrate-binding residues include lysine 21, arginine 35, and tyrosine 47. Mg(2+)-binding residues include aspartate 57, aspartate 62, and aspartate 94. Tyrosine 131 is a substrate binding site.

This sequence belongs to the PPase family. As to quaternary structure, homotrimer. In presence of divalent cations the trimers aggregate to form a hexamer. Mg(2+) serves as cofactor.

It is found in the cytoplasm. The enzyme catalyses diphosphate + H2O = 2 phosphate + H(+). Its function is as follows. Catalyzes the hydrolysis of inorganic pyrophosphate (PPi) forming two phosphate ions. The polypeptide is Inorganic pyrophosphatase (Bacillus sp. (strain PS3)).